The sequence spans 212 residues: Inner membrane-spanning protein YciB (212 aa).

The next 5 membrane-spanning stretches (helical) occupy residues 49–69, 78–98, 105–125, 150–170, and 178–198; these read APVL…VLYL, TMLW…IWFH, WKPS…PIVA, LAWA…AYNF, and FKAF…GLYM.

This sequence belongs to the YciB family.

The protein localises to the cell inner membrane. Its function is as follows. Plays a role in cell envelope biogenesis, maintenance of cell envelope integrity and membrane homeostasis. In Leptothrix cholodnii (strain ATCC 51168 / LMG 8142 / SP-6) (Leptothrix discophora (strain SP-6)), this protein is Inner membrane-spanning protein YciB.